We begin with the raw amino-acid sequence, 520 residues long: Cobalt-zinc-cadmium resistance protein CzcB (520 aa).

Residues 9–29 (AAIAAIVLVGGVATGGVLLSG) form a helical membrane-spanning segment. Positions 28-85 (SGRSAPEEQGGHSESKGHGDTEHHGKQAAEADHKDDKSHGDGEHHEVKKGPNGGALFS) are disordered. Positions 32-76 (APEEQGGHSESKGHGDTEHHGKQAAEADHKDDKSHGDGEHHEVKK) are enriched in basic and acidic residues. Residues 286–320 (EQKISAEQDYLSARNALQEAQISVQNAQQKLTAIG) adopt a coiled-coil conformation.

This sequence belongs to the membrane fusion protein (MFP) (TC 8.A.1) family.

It is found in the cell inner membrane. Functionally, czcA and CzcB together would act in zinc efflux nearly as effectively as the complete czc efflux system (CzcABC). The CzcB protein is thought to funnel zinc cations to the CzcA transport protein. The sequence is that of Cobalt-zinc-cadmium resistance protein CzcB (czcB) from Cupriavidus metallidurans (strain ATCC 43123 / DSM 2839 / NBRC 102507 / CH34) (Ralstonia metallidurans).